A 95-amino-acid chain; its full sequence is Aspartyl/glutamyl-tRNA(Asn/Gln) amidotransferase subunit C (95 aa).

This sequence belongs to the GatC family. In terms of assembly, heterotrimer of A, B and C subunits.

It catalyses the reaction L-glutamyl-tRNA(Gln) + L-glutamine + ATP + H2O = L-glutaminyl-tRNA(Gln) + L-glutamate + ADP + phosphate + H(+). The enzyme catalyses L-aspartyl-tRNA(Asn) + L-glutamine + ATP + H2O = L-asparaginyl-tRNA(Asn) + L-glutamate + ADP + phosphate + 2 H(+). Functionally, allows the formation of correctly charged Asn-tRNA(Asn) or Gln-tRNA(Gln) through the transamidation of misacylated Asp-tRNA(Asn) or Glu-tRNA(Gln) in organisms which lack either or both of asparaginyl-tRNA or glutaminyl-tRNA synthetases. The reaction takes place in the presence of glutamine and ATP through an activated phospho-Asp-tRNA(Asn) or phospho-Glu-tRNA(Gln). This Chromohalobacter salexigens (strain ATCC BAA-138 / DSM 3043 / CIP 106854 / NCIMB 13768 / 1H11) protein is Aspartyl/glutamyl-tRNA(Asn/Gln) amidotransferase subunit C.